The following is a 232-amino-acid chain: Two-component response regulator ORR4 (232 aa).

Residues 11-147 (HVLAVDDSLI…DMKKLKSHLL (137 aa)) enclose the Response regulatory domain. D80 is modified (4-aspartylphosphate). Disordered stretches follow at residues 153-174 (LPMAAAAPDKPPHKPDEAAASA) and 202-232 (AAAMEQEVISSPDQRTKPRLSSTSSGLAVET). The segment covering 209 to 232 (VISSPDQRTKPRLSSTSSGLAVET) has biased composition (polar residues).

Belongs to the ARR family. Type-A subfamily. Post-translationally, two-component system major event consists of a His-to-Asp phosphorelay between a sensor histidine kinase (HK) and a response regulator (RR). In plants, the His-to-Asp phosphorelay involves an additional intermediate named Histidine-containing phosphotransfer protein (HPt). This multistep phosphorelay consists of a His-Asp-His-Asp sequential transfer of a phosphate group between first a His and an Asp of the HK protein, followed by the transfer to a conserved His of the HPt protein and finally the transfer to an Asp in the receiver domain of the RR protein. Expressed in mature leaves and flowers, and at low levels in roots and shoots.

Its function is as follows. Functions as a response regulator involved in His-to-Asp phosphorelay signal transduction system. Phosphorylation of the Asp residue in the receiver domain activates the ability of the protein to promote the transcription of target genes. Type-A response regulators seem to act as negative regulators of the cytokinin signaling. This Oryza sativa subsp. indica (Rice) protein is Two-component response regulator ORR4.